We begin with the raw amino-acid sequence, 186 residues long: Ribosome maturation factor RimP (186 aa).

Belongs to the RimP family.

It is found in the cytoplasm. In terms of biological role, required for maturation of 30S ribosomal subunits. The chain is Ribosome maturation factor RimP from Rhizorhabdus wittichii (strain DSM 6014 / CCUG 31198 / JCM 15750 / NBRC 105917 / EY 4224 / RW1) (Sphingomonas wittichii).